We begin with the raw amino-acid sequence, 397 residues long: Succinate--CoA ligase [ADP-forming] subunit beta (397 aa).

One can recognise an ATP-grasp domain in the interval 9-253; sequence KEILASYGVR…IREENPIEVE (245 aa). Residues K50, 57–59, V106, and E116 each bind ATP; that span reads GRG. Mg(2+) is bound by residues N208 and D222. Substrate is bound by residues N273 and 330–332; that span reads GIV.

The protein belongs to the succinate/malate CoA ligase beta subunit family. As to quaternary structure, heterotetramer of two alpha and two beta subunits. Requires Mg(2+) as cofactor.

The enzyme catalyses succinate + ATP + CoA = succinyl-CoA + ADP + phosphate. It catalyses the reaction GTP + succinate + CoA = succinyl-CoA + GDP + phosphate. It functions in the pathway carbohydrate metabolism; tricarboxylic acid cycle; succinate from succinyl-CoA (ligase route): step 1/1. In terms of biological role, succinyl-CoA synthetase functions in the citric acid cycle (TCA), coupling the hydrolysis of succinyl-CoA to the synthesis of either ATP or GTP and thus represents the only step of substrate-level phosphorylation in the TCA. The beta subunit provides nucleotide specificity of the enzyme and binds the substrate succinate, while the binding sites for coenzyme A and phosphate are found in the alpha subunit. The sequence is that of Succinate--CoA ligase [ADP-forming] subunit beta from Flavobacterium johnsoniae (strain ATCC 17061 / DSM 2064 / JCM 8514 / BCRC 14874 / CCUG 350202 / NBRC 14942 / NCIMB 11054 / UW101) (Cytophaga johnsonae).